Consider the following 351-residue polypeptide: Sulfate/thiosulfate import ATP-binding protein CysA (351 aa).

In terms of domain architecture, ABC transporter spans 5–235 (IVVADATKRY…PANAFVMSFL (231 aa)). 37–44 (GPSGSGKS) provides a ligand contact to ATP.

It belongs to the ABC transporter superfamily. Sulfate/tungstate importer (TC 3.A.1.6) family. In terms of assembly, the complex is composed of two ATP-binding proteins (CysA), two transmembrane proteins (CysT and CysW) and a solute-binding protein (CysP).

It localises to the cell membrane. It catalyses the reaction sulfate(out) + ATP + H2O = sulfate(in) + ADP + phosphate + H(+). The enzyme catalyses thiosulfate(out) + ATP + H2O = thiosulfate(in) + ADP + phosphate + H(+). In terms of biological role, part of the ABC transporter complex CysAWTP involved in sulfate/thiosulfate import. Responsible for energy coupling to the transport system. The polypeptide is Sulfate/thiosulfate import ATP-binding protein CysA (Mycobacterium bovis (strain ATCC BAA-935 / AF2122/97)).